The primary structure comprises 610 residues: Glutamine--fructose-6-phosphate aminotransferase [isomerizing] (610 aa).

Residue Cys2 is the Nucleophile; for GATase activity of the active site. The 218-residue stretch at 2–219 folds into the Glutamine amidotransferase type-2 domain; the sequence is CGIVGATSER…EGDVADINRT (218 aa). SIS domains lie at 287-427 and 459-600; these read AADI…YRGM and LAQD…VDQP. The active-site For Fru-6P isomerization activity is the Lys605.

Homodimer.

The protein resides in the cytoplasm. The enzyme catalyses D-fructose 6-phosphate + L-glutamine = D-glucosamine 6-phosphate + L-glutamate. Functionally, catalyzes the first step in hexosamine metabolism, converting fructose-6P into glucosamine-6P using glutamine as a nitrogen source. The polypeptide is Glutamine--fructose-6-phosphate aminotransferase [isomerizing] (Idiomarina loihiensis (strain ATCC BAA-735 / DSM 15497 / L2-TR)).